Consider the following 247-residue polypeptide: Carboxy-S-adenosyl-L-methionine synthase (247 aa).

S-adenosyl-L-methionine-binding positions include Y39, 64 to 66 (GCS), 89 to 90 (DN), 117 to 118 (DI), N132, and R199.

It belongs to the class I-like SAM-binding methyltransferase superfamily. Cx-SAM synthase family. In terms of assembly, homodimer.

It carries out the reaction prephenate + S-adenosyl-L-methionine = carboxy-S-adenosyl-L-methionine + 3-phenylpyruvate + H2O. In terms of biological role, catalyzes the conversion of S-adenosyl-L-methionine (SAM) to carboxy-S-adenosyl-L-methionine (Cx-SAM). The sequence is that of Carboxy-S-adenosyl-L-methionine synthase from Cronobacter sakazakii (strain ATCC BAA-894) (Enterobacter sakazakii).